The chain runs to 96 residues: Protein RnfH (96 aa).

The protein belongs to the UPF0125 (RnfH) family.

The sequence is that of Protein RnfH from Shigella flexneri.